Here is a 515-residue protein sequence, read N- to C-terminus: Elongation factor 1-alpha S (515 aa).

The tr-type G domain occupies 5–258 (KTHINLVVIG…DAMKPPKRPT (254 aa)). The G1 stretch occupies residues 14 to 21 (GHVDAGKS). 14–21 (GHVDAGKS) provides a ligand contact to GTP. K55 carries the N6,N6-dimethyllysine modification. A G2 region spans residues 70 to 74 (GITID). The residue at position 79 (K79) is an N6,N6,N6-trimethyllysine. Residues 91–94 (DAPG) form a G3 region. GTP-binding positions include 91 to 95 (DAPGH) and 151 to 154 (NKMD). Positions 151-154 (NKMD) are G4. The disordered stretch occupies residues 187–206 (KKDKGDKKKGDKKEKKDKKD). Residues 189-206 (DKGDKKKGDKKEKKDKKD) show a composition bias toward basic and acidic residues. The tract at residues 222–224 (SGW) is G5. K289 carries the post-translational modification N6-methyllysine. Position 334 is an N6,N6,N6-trimethyllysine (K334). Residues 396–419 (KRGKQTHDVSDDTEWATKDDAEPR) are disordered. Basic and acidic residues predominate over residues 398-419 (GKQTHDVSDDTEWATKDDAEPR). K441 carries the N6,N6,N6-trimethyllysine modification.

The protein belongs to the TRAFAC class translation factor GTPase superfamily. Classic translation factor GTPase family. EF-Tu/EF-1A subfamily.

It is found in the cytoplasm. This protein promotes the GTP-dependent binding of aminoacyl-tRNA to the A-site of ribosomes during protein biosynthesis. The sequence is that of Elongation factor 1-alpha S (TEF-S) from Porphyra purpurea (Red seaweed).